Consider the following 210-residue polypeptide: Transcription factor ALC (210 aa).

The segment at methionine 1–threonine 49 is disordered. A compositionally biased stretch (polar residues) spans leucine 27 to glutamate 48. Residues isoleucine 93–leucine 142 form the bHLH domain.

Homodimer. Expressed constitutively in roots, leaves, stems, and flowers. Confined to the valve margins of the silique.

The protein localises to the nucleus. Functionally, required for the dehiscence of fruit, especially for the separation of the valve cells from the replum. Promotes the differentiation of a strip of labile nonlignified cells sandwiched between layers of lignified cells. The sequence is that of Transcription factor ALC (ALC) from Arabidopsis thaliana (Mouse-ear cress).